The primary structure comprises 465 residues: ATP-sulfurylase 3, chloroplastic (465 aa).

A chloroplast-targeting transit peptide spans 1-49 (MASMSTVFPKPTSFISQPLTKSHKSDSVTTSISFPSNSKTRSLRTISVR).

Belongs to the sulfate adenylyltransferase family. Homotetramer.

The protein resides in the plastid. The protein localises to the chloroplast stroma. The catalysed reaction is sulfate + ATP + H(+) = adenosine 5'-phosphosulfate + diphosphate. It functions in the pathway sulfur metabolism; hydrogen sulfide biosynthesis; sulfite from sulfate: step 1/3. The polypeptide is ATP-sulfurylase 3, chloroplastic (APS3) (Arabidopsis thaliana (Mouse-ear cress)).